A 535-amino-acid polypeptide reads, in one-letter code: Alpha-1,3-mannosyl-glycoprotein 4-beta-N-acetylglucosaminyltransferase A (535 aa).

At 1–6 (MRLRNG) the chain is on the cytoplasmic side. Residues 7-27 (TVATVLAFITSFLTLSWYTTW) form a helical; Signal-anchor for type II membrane protein membrane-spanning segment. Over 28–535 (QNGKEKVIAY…NEIHIKKVTN (508 aa)) the chain is Lumenal. A coiled-coil region spans residues 31-57 (KEKVIAYQREFLALKERLRIAEHRISQ). N-linked (GlcNAc...) asparagine glycans are attached at residues Asn77 and Asn458. At Ser474 the chain carries Phosphoserine.

It belongs to the glycosyltransferase 54 family. A divalent metal cation serves as cofactor. N-glycosylated. In terms of tissue distribution, highly expressed in small intestine, kidney, lung and spleen. Weakly expressed in brain, heart and liver.

It is found in the golgi apparatus membrane. It localises to the secreted. It catalyses the reaction N(4)-{beta-D-GlcNAc-(1-&gt;2)-alpha-D-Man-(1-&gt;3)-[beta-D-GlcNAc-(1-&gt;2)-alpha-D-Man-(1-&gt;6)]-beta-D-Man-(1-&gt;4)-beta-D-GlcNAc-(1-&gt;4)-beta-D-GlcNAc}-L-asparaginyl-[protein] + UDP-N-acetyl-alpha-D-glucosamine = N(4)-{beta-D-GlcNAc-(1-&gt;2)-[beta-D-GlcNAc-(1-&gt;4)]-alpha-D-Man-(1-&gt;3)-[beta-D-GlcNAc-(1-&gt;2)-alpha-D-Man-(1-&gt;6)]-beta-D-Man-(1-&gt;4)-beta-D-GlcNAc-(1-&gt;4)-beta-D-GlcNAc}-L-asparaginyl-[protein] + UDP + H(+). The enzyme catalyses an N(4)-{beta-D-GlcNAc-(1-&gt;2)-alpha-D-Man-(1-&gt;3)-[alpha-D-Man-(1-&gt;6)]-beta-D-Man-(1-&gt;4)-beta-D-GlcNAc-(1-&gt;4)-beta-D-GlcNAc}-L-asparaginyl-[protein] + UDP-N-acetyl-alpha-D-glucosamine = an N(4)-{beta-D-GlcNAc-(1-&gt;2)-[beta-D-GlcNAc-(1-&gt;4)]-alpha-D-Man-(1-&gt;3)-[alpha-D-Man-(1-&gt;6)]-beta-D-Man-(1-&gt;4)-beta-D-GlcNAc-(1-&gt;4)-beta-D-GlcNAc}-L-asparaginyl-[protein] + UDP + H(+). It carries out the reaction an N(4)-{beta-D-GlcNAc-(1-&gt;2)-alpha-D-Man-(1-&gt;3)-[beta-D-GlcNAc-(1-&gt;2)-[beta-D-GlcNAc-(1-&gt;6)]-alpha-D-Man-(1-&gt;6)]-beta-D-Man-(1-&gt;4)-beta-D-GlcNAc-(1-&gt;4)-beta-D-GlcNAc}-L-asparaginyl-[protein] + UDP-N-acetyl-alpha-D-glucosamine = an N(4)-{beta-D-GlcNAc-(1-&gt;2)-[beta-D-GlcNAc-(1-&gt;4)]-alpha-D-Man-(1-&gt;3)-[beta-D-GlcNAc-(1-&gt;2)-[beta-D-GlcNAc-(1-&gt;6)]-alpha-D-Man-(1-&gt;6)]-beta-D-Man-(1-&gt;4)-beta-D-GlcNAc-(1-&gt;4)-beta-D-GlcNAc}-L-asparaginyl-[protein] + UDP + H(+). The catalysed reaction is an N(4)-{beta-D-GlcNAc-(1-&gt;2)-alpha-D-Man-(1-&gt;3)-[beta-D-GlcNAc-(1-&gt;2)-alpha-D-Man-(1-&gt;6)]-beta-D-Man-(1-&gt;4)-beta-D-GlcNAc-(1-&gt;4)-[alpha-L-Fuc-(1-&gt;6)]-beta-D-GlcNAc}-L-asparaginyl-[protein] + UDP-N-acetyl-alpha-D-glucosamine = N(4)-{beta-D-GlcNAc-(1-&gt;2)-[beta-D-GlcNAc-(1-&gt;4)]-alpha-D-Man-(1-&gt;3)-[beta-D-GlcNAc-(1-&gt;2)-alpha-D-Man-(1-&gt;6)]-beta-D-Man-(1-&gt;4)-beta-D-GlcNAc-(1-&gt;4)-[alpha-L-Fuc-(1-&gt;6)]-beta-D-GlcNAc}-asparaginyl-[protein] + UDP + H(+). It catalyses the reaction an N(4)-{beta-D-GlcNAc-(1-&gt;2)-alpha-D-Man-(1-&gt;3)-[beta-D-Gal-(1-&gt;4)-beta-D-GlcNAc-(1-&gt;2)-alpha-D-Man-(1-&gt;6)]-beta-D-Man-(1-&gt;4)-beta-D-GlcNAc-(1-&gt;4)-beta-D-GlcNAc}-L-asparaginyl-[protein] + UDP-N-acetyl-alpha-D-glucosamine = an N(4)-{beta-D-GlcNAc-(1-&gt;2)-[beta-D-GlcNAc-(1-&gt;4)]-alpha-D-Man-(1-&gt;3)-[beta-D-Gal-(1-&gt;4)-beta-D-GlcNAc-(1-&gt;2)-alpha-D-Man-(1-&gt;6)]-beta-D-Man-(1-&gt;4)-beta-D-GlcNAc-(1-&gt;4)-beta-D-GlcNAc}-L-asparaginyl-[protein] + UDP + H(+). The enzyme catalyses N(4)-{beta-D-GlcNAc-(1-&gt;2)-alpha-D-Man-(1-&gt;3)-[alpha-D-Man-(1-&gt;3)-{alpha-D-Man-(1-&gt;6)}-alpha-D-Man-(1-&gt;6)]-beta-D-Man-(1-&gt;4)-beta-D-GlcNAc-(1-&gt;4)-beta-D-GlcNAc}-asparaginyl-[protein] + UDP-N-acetyl-alpha-D-glucosamine = N(4)-{beta-D-GlcNAc-(1-&gt;2)-[beta-D-GlcNAc-(1-&gt;4)]-alpha-D-Man-(1-&gt;3)-[alpha-D-Man-(1-&gt;3)-{alpha-D-Man-(1-&gt;6)}-alpha-D-Man-(1-&gt;6)]-beta-D-Man-(1-&gt;4)-beta-D-GlcNAc-(1-&gt;4)-beta-D-GlcNAc}-asparaginyl-[protein] + UDP + H(+). It carries out the reaction N(4)-{beta-D-GlcNAc-(1-&gt;2)-alpha-D-Man-(1-&gt;3)-beta-D-Man-(1-&gt;4)-beta-D-GlcNAc-(1-&gt;4)-beta-D-GlcNAc}-asparaginyl-[protein] + UDP-N-acetyl-alpha-D-glucosamine = N(4)-{beta-D-GlcNAc-(1-&gt;2)-[beta-D-GlcNAc-(1-&gt;4)]-alpha-D-Man-(1-&gt;3)-beta-D-Man-(1-&gt;4)-beta-D-GlcNAc-(1-&gt;4)-beta-D-GlcNAc}-asparaginyl-[protein] + UDP + H(+). It functions in the pathway protein modification; protein glycosylation. Its activity is regulated as follows. Inhibited by UDP. In terms of biological role, glycosyltransferase that catalyze the transfer of GlcNAc from UDP-GlcNAc to the GlcNAcbeta1-2Manalpha1-3 arm of the core structure of N-linked glycans through a beta1-4 linkage and participates in the production of tri- and tetra-antennary N-linked sugar chains. Involved in glucose transport by mediating SLC2A2/GLUT2 glycosylation, thereby controlling cell-surface expression of SLC2A2 in pancreatic beta cells. The polypeptide is Alpha-1,3-mannosyl-glycoprotein 4-beta-N-acetylglucosaminyltransferase A (Bos taurus (Bovine)).